The sequence spans 1172 residues: DNA-directed RNA polymerase subunit beta (1172 aa).

Belongs to the RNA polymerase beta chain family. The RNAP catalytic core consists of 2 alpha, 1 beta, 1 beta' and 1 omega subunit. When a sigma factor is associated with the core the holoenzyme is formed, which can initiate transcription.

The catalysed reaction is RNA(n) + a ribonucleoside 5'-triphosphate = RNA(n+1) + diphosphate. DNA-dependent RNA polymerase catalyzes the transcription of DNA into RNA using the four ribonucleoside triphosphates as substrates. The chain is DNA-directed RNA polymerase subunit beta from Pseudothermotoga lettingae (strain ATCC BAA-301 / DSM 14385 / NBRC 107922 / TMO) (Thermotoga lettingae).